Consider the following 204-residue polypeptide: Large ribosomal subunit protein uL4 (204 aa).

The interval 47-69 (KAQKTRAEVSGGGKKPWRQKGTG) is disordered.

It belongs to the universal ribosomal protein uL4 family. Part of the 50S ribosomal subunit.

One of the primary rRNA binding proteins, this protein initially binds near the 5'-end of the 23S rRNA. It is important during the early stages of 50S assembly. It makes multiple contacts with different domains of the 23S rRNA in the assembled 50S subunit and ribosome. In terms of biological role, forms part of the polypeptide exit tunnel. This Cellvibrio japonicus (strain Ueda107) (Pseudomonas fluorescens subsp. cellulosa) protein is Large ribosomal subunit protein uL4.